The primary structure comprises 492 residues: Fascin-2 (492 aa).

Belongs to the fascin family. As to expression, expressed in the inner ear. Abundant in the utricle.

The protein resides in the cytoplasm. It is found in the cytoskeleton. It localises to the cell projection. The protein localises to the stereocilium. In terms of biological role, acts as an actin bundling protein. May play a pivotal role in photoreceptor cell-specific events, such as disk morphogenesis. Important for maintaining functional hair-cell bundles in the inner ear. May stiffen the longer stereocilia of hair-cell bundles in the inner ear enabling better force transmission to tip links. The polypeptide is Fascin-2 (Fscn2) (Mus musculus (Mouse)).